Reading from the N-terminus, the 272-residue chain is Universal stress protein MT2699 (272 aa).

ATP-binding positions include G15, 109–115 (GSVGIGR), and 123–124 (ST).

This sequence belongs to the universal stress protein A family.

This is Universal stress protein MT2699 from Mycobacterium tuberculosis (strain CDC 1551 / Oshkosh).